The chain runs to 207 residues: ATP-dependent Clp protease proteolytic subunit (207 aa).

Ser-111 acts as the Nucleophile in catalysis. His-136 is an active-site residue.

The protein belongs to the peptidase S14 family. As to quaternary structure, fourteen ClpP subunits assemble into 2 heptameric rings which stack back to back to give a disk-like structure with a central cavity, resembling the structure of eukaryotic proteasomes. Component of the ClpAP and ClpXP complexes.

It is found in the cytoplasm. It carries out the reaction Hydrolysis of proteins to small peptides in the presence of ATP and magnesium. alpha-casein is the usual test substrate. In the absence of ATP, only oligopeptides shorter than five residues are hydrolyzed (such as succinyl-Leu-Tyr-|-NHMec, and Leu-Tyr-Leu-|-Tyr-Trp, in which cleavage of the -Tyr-|-Leu- and -Tyr-|-Trp bonds also occurs).. In terms of biological role, cleaves peptides in various proteins in a process that requires ATP hydrolysis. Has a chymotrypsin-like activity. Plays a major role in the degradation of misfolded proteins. The polypeptide is ATP-dependent Clp protease proteolytic subunit (Escherichia coli O139:H28 (strain E24377A / ETEC)).